Consider the following 307-residue polypeptide: Elongation factor Ts (307 aa).

The involved in Mg(2+) ion dislocation from EF-Tu stretch occupies residues 82 to 85 (TDFV).

This sequence belongs to the EF-Ts family.

Its subcellular location is the cytoplasm. Functionally, associates with the EF-Tu.GDP complex and induces the exchange of GDP to GTP. It remains bound to the aminoacyl-tRNA.EF-Tu.GTP complex up to the GTP hydrolysis stage on the ribosome. The chain is Elongation factor Ts from Nautilia profundicola (strain ATCC BAA-1463 / DSM 18972 / AmH).